Consider the following 546-residue polypeptide: Probable protein kinase UbiB (546 aa).

In terms of domain architecture, Protein kinase spans Asp-124–Phe-502. Residues Leu-130 to Val-138 and Lys-153 each bind ATP. Asp-288 functions as the Proton acceptor in the catalytic mechanism. 2 helical membrane passes run Tyr-501–Pro-521 and Glu-522–Trp-542.

This sequence belongs to the ABC1 family. UbiB subfamily.

It is found in the cell inner membrane. It participates in cofactor biosynthesis; ubiquinone biosynthesis [regulation]. Is probably a protein kinase regulator of UbiI activity which is involved in aerobic coenzyme Q (ubiquinone) biosynthesis. The chain is Probable protein kinase UbiB from Escherichia coli O127:H6 (strain E2348/69 / EPEC).